The sequence spans 300 residues: Porphobilinogen deaminase (300 aa).

Residue Cys-241 is modified to S-(dipyrrolylmethanemethyl)cysteine.

Belongs to the HMBS family. As to quaternary structure, monomer. The cofactor is dipyrromethane.

It carries out the reaction 4 porphobilinogen + H2O = hydroxymethylbilane + 4 NH4(+). The protein operates within porphyrin-containing compound metabolism; protoporphyrin-IX biosynthesis; coproporphyrinogen-III from 5-aminolevulinate: step 2/4. Functionally, tetrapolymerization of the monopyrrole PBG into the hydroxymethylbilane pre-uroporphyrinogen in several discrete steps. This chain is Porphobilinogen deaminase, found in Sorangium cellulosum (strain So ce56) (Polyangium cellulosum (strain So ce56)).